Here is a 420-residue protein sequence, read N- to C-terminus: Histidine--tRNA ligase, chloroplastic (420 aa).

Belongs to the class-II aminoacyl-tRNA synthetase family.

It is found in the plastid. Its subcellular location is the chloroplast. The enzyme catalyses tRNA(His) + L-histidine + ATP = L-histidyl-tRNA(His) + AMP + diphosphate + H(+). This is Histidine--tRNA ligase, chloroplastic from Gracilaria tenuistipitata var. liui (Red alga).